Consider the following 198-residue polypeptide: Recombination protein RecR (198 aa).

The C4-type zinc finger occupies Cys56–Cys71. The region spanning Ala79–Pro174 is the Toprim domain.

This sequence belongs to the RecR family.

Functionally, may play a role in DNA repair. It seems to be involved in an RecBC-independent recombinational process of DNA repair. It may act with RecF and RecO. The polypeptide is Recombination protein RecR (Leifsonia xyli subsp. xyli (strain CTCB07)).